The primary structure comprises 147 residues: Protein LOL1 (147 aa).

Positions 1 to 38 are disordered; that stretch reads MVASRAPRSESPWLKKPMHGVSGSTAMASTPWSSMPPS. Residues 22-38 show a composition bias toward polar residues; that stretch reads SGSTAMASTPWSSMPPS. A putative zinc finger region spans residues 47 to 77; sequence QLVCSGCRNLLMYPAGATSICCAVCGTVTAV.

The protein resides in the nucleus. Putative zinc finger that may be involved in programmed cell death and defense response. The protein is Protein LOL1 (LOL1) of Oryza sativa subsp. japonica (Rice).